The following is a 533-amino-acid chain: Probable lipid II flippase MurJ (533 aa).

14 consecutive transmembrane segments (helical) span residues 11-31, 39-61, 96-116, 135-155, 166-186, 196-216, 253-273, 284-304, 330-350, 360-380, 400-420, 422-442, 452-472, and 493-513; these read LANI…FGLL, AFGV…FLFI, LVSG…GIFI, LQIM…FGTL, ISPL…VWQL, WLLG…LQWL, LSSG…SFIP, FVAL…FLPV, LTMF…VQVI, AAAE…FYLG, VSLF…KPFG, VGIV…FIWM, LGGW…ASVA, and ILEV…GVAL.

The protein belongs to the MurJ/MviN family.

Its subcellular location is the cell inner membrane. The protein operates within cell wall biogenesis; peptidoglycan biosynthesis. Its function is as follows. Involved in peptidoglycan biosynthesis. Transports lipid-linked peptidoglycan precursors from the inner to the outer leaflet of the cytoplasmic membrane. This chain is Probable lipid II flippase MurJ, found in Synechocystis sp. (strain ATCC 27184 / PCC 6803 / Kazusa).